A 274-amino-acid polypeptide reads, in one-letter code: Proteasome subunit beta type-5-A (274 aa).

The propeptide at 1-57 (MKLDTSGFETSMPMIGFGSSSDMLDELSSVPSFDLPRTKEFDGFQKKAKDMLKHAKG) is removed in mature form. The Nucleophile role is filled by threonine 58.

The protein belongs to the peptidase T1B family. Component of the 20S core complex of the 26S proteasome. The 26S proteasome is composed of a core protease (CP), known as the 20S proteasome, capped at one or both ends by the 19S regulatory particle (RP/PA700). The 20S proteasome core is composed of 28 subunits that are arranged in four stacked rings, resulting in a barrel-shaped structure. The two end rings are each formed by seven alpha subunits, and the two central rings are each formed by seven beta subunits. The catalytic chamber with the active sites is on the inside of the barrel. In terms of tissue distribution, ubiquitous low levels, higher expression in siliques and flowers.

The protein resides in the cytoplasm. It localises to the nucleus. It carries out the reaction Cleavage of peptide bonds with very broad specificity.. Its function is as follows. The proteasome is a multicatalytic proteinase complex which is characterized by its ability to cleave peptides with Arg, Phe, Tyr, Leu, and Glu adjacent to the leaving group at neutral or slightly basic pH. The proteasome has an ATP-dependent proteolytic activity. This chain is Proteasome subunit beta type-5-A (PBE1), found in Arabidopsis thaliana (Mouse-ear cress).